Here is a 506-residue protein sequence, read N- to C-terminus: Probable cytochrome P450 309a1 (506 aa).

Residues threonine 75, threonine 78, and threonine 81 each carry the phosphothreonine modification. Heme is bound at residue cysteine 452.

The protein belongs to the cytochrome P450 family. It depends on heme as a cofactor.

The protein localises to the endoplasmic reticulum membrane. Its subcellular location is the microsome membrane. Its function is as follows. May be involved in the metabolism of insect hormones and in the breakdown of synthetic insecticides. The protein is Probable cytochrome P450 309a1 (Cyp309a1) of Drosophila melanogaster (Fruit fly).